The sequence spans 184 residues: Photosystem I assembly protein Ycf4 (184 aa).

The next 2 membrane-spanning stretches (helical) occupy residues 22–42 (FCWA…GISS) and 64–84 (IVMS…WSTI).

Belongs to the Ycf4 family.

The protein resides in the plastid. Its subcellular location is the chloroplast thylakoid membrane. In terms of biological role, seems to be required for the assembly of the photosystem I complex. The sequence is that of Photosystem I assembly protein Ycf4 from Piper cenocladum (Ant piper).